Consider the following 179-residue polypeptide: Lebocin-3 (179 aa).

A signal peptide spans 1–16 (MYKFLVFSSVLVLFFA). Positions 17–120 (QASCQRFIQP…QPIESHRNTR (104 aa)) are excised as a propeptide. Thr-135 carries O-linked (GalNAc...) threonine glycosylation. The propeptide occupies 153 to 179 (RRHASEDQEELRQYNEHFLIPRDIFQE).

It belongs to the lebocin family. In terms of processing, O-glycosylation is important for the antibacterial activity of lebocin. In terms of tissue distribution, hemolymph. Produced in fat body.

The protein localises to the secreted. Antibacterial peptide. This chain is Lebocin-3 (LEB3), found in Bombyx mori (Silk moth).